A 624-amino-acid chain; its full sequence is Probable potassium transport system protein Kup 2 (624 aa).

Transmembrane regions (helical) follow at residues 14 to 34, 51 to 71, 97 to 117, 133 to 153, 163 to 183, 211 to 231, 245 to 265, 283 to 303, 335 to 355, 364 to 384, 393 to 413, and 416 to 436; these read LSFA…LYAF, ILSL…LVIV, GGWL…DGML, LSPN…FFLF, IGVY…ILGF, SALF…ALFA, WFAV…AFVL, FLPV…QAII, VYLP…VVIF, AYGI…GIIA, FKIL…AGNI, and LLTG…VMYT.

Belongs to the HAK/KUP transporter (TC 2.A.72) family.

It localises to the cell inner membrane. The enzyme catalyses K(+)(in) + H(+)(in) = K(+)(out) + H(+)(out). In terms of biological role, transport of potassium into the cell. Likely operates as a K(+):H(+) symporter. The sequence is that of Probable potassium transport system protein Kup 2 from Legionella pneumophila (strain Lens).